The chain runs to 186 residues: Dynactin subunit 3 (186 aa).

A2 bears the N-acetylalanine mark. The stretch at 135–157 (QQQDQCVEITEESKALLEEYNKT) forms a coiled coil.

Belongs to the dynactin subunit 3 family. Subunit of dynactin, a multiprotein complex part of a tripartite complex with dynein and a adapter, such as BICDL1, BICD2 or HOOK3. The dynactin complex is built around ACTR1A/ACTB filament and consists of an actin-related filament composed of a shoulder domain, a pointed end and a barbed end. Its length is defined by its flexible shoulder domain. The soulder is composed of 2 DCTN1 subunits, 4 DCTN2 and 2 DCTN3. The 4 DCNT2 (via N-terminus) bind the ACTR1A filament and act as molecular rulers to determine the length. The pointed end is important for binding dynein-dynactin cargo adapters. Consists of 4 subunits: ACTR10, DCNT4, DCTN5 and DCTN6. The barbed end is composed of a CAPZA1:CAPZB heterodimers, which binds ACTR1A/ACTB filament and dynactin and stabilizes dynactin.

It localises to the cytoplasm. It is found in the cytoskeleton. The protein resides in the microtubule organizing center. The protein localises to the centrosome. Its subcellular location is the chromosome. It localises to the centromere. It is found in the kinetochore. The protein resides in the spindle. The protein localises to the cleavage furrow. Its subcellular location is the midbody. Part of the dynactin complex that activates the molecular motor dynein for ultra-processive transport along microtubules. Together with dynein may be involved in spindle assembly and cytokinesis. This chain is Dynactin subunit 3 (DCTN3), found in Bos taurus (Bovine).